A 386-amino-acid chain; its full sequence is Ribosomal RNA small subunit methyltransferase H (386 aa).

Residues 97 to 99, aspartate 116, tyrosine 143, aspartate 167, and glutamine 174 each bind S-adenosyl-L-methionine; that span reads GGH.

This sequence belongs to the methyltransferase superfamily. RsmH family.

The protein localises to the cytoplasm. The enzyme catalyses cytidine(1402) in 16S rRNA + S-adenosyl-L-methionine = N(4)-methylcytidine(1402) in 16S rRNA + S-adenosyl-L-homocysteine + H(+). In terms of biological role, specifically methylates the N4 position of cytidine in position 1402 (C1402) of 16S rRNA. In Mycolicibacterium paratuberculosis (strain ATCC BAA-968 / K-10) (Mycobacterium paratuberculosis), this protein is Ribosomal RNA small subunit methyltransferase H.